We begin with the raw amino-acid sequence, 170 residues long: MKTQRDGHSLGRWSLVLLLLGLVMPLAIIAQVLSYKEAVLRAIDGINQRSSDANLYRLLDLDPRPTMDGDPDTPKPVSFTVKETVCPRTTQQSPEDCDFKKDGLVKRCMGTVTLNQARGSFDISCDKDNKRFALLGDFFRKSKEKIGKEFKRIVQRIKDFLRNLVPRTES.

Positions 1 to 30 (MKTQRDGHSLGRWSLVLLLLGLVMPLAIIA) are cleaved as a signal peptide. Residues 31-131 (QVLSYKEAVL…DISCDKDNKR (101 aa)) constitute a propeptide, cathelin-like domain (CLD). Disulfide bonds link Cys-86/Cys-97 and Cys-108/Cys-125. Residues 150-162 (FKRIVQRIKDFLR) are active core.

This sequence belongs to the cathelicidin family. In terms of assembly, monomer, homodimer or homotrimer (in vitro). Oligomerizes as tetra- or hexamer in solution (in vitro). In terms of processing, the N-terminus is blocked. Post-translationally, proteolytically cleaved by proteinase PRTN3 into antibacterial peptide LL-37. Proteolytically cleaved by cathepsin CTSG and neutrophil elastase ELANE. Resistant to proteolytic degradation in solution, and when bound to both zwitterionic (mimicking mammalian membranes) and negatively charged membranes (mimicking bacterial membranes). In terms of processing, after secretion onto the skin surface, the CAMP gene product is processed by a serine protease-dependent mechanism into multiple novel antimicrobial peptides distinct from and shorter than cathelicidin LL-37, such as peptides KR-20 (residues 151-170), LL-23 (residues 134-156), LL-29 (residues 134-162), KS-30 (residues 141-170), RK-31 (residues 140-170) and FF-33 (residues 138-170). The peptides act synergistically, killing bacteria at lower concentrations when present together, and maintain activity at increased salt condition. In terms of tissue distribution, expressed in neutrophilic granulocytes (at protein level). Expressed in bone marrow. Expressed in granulocytes (at protein level). Expressed by the eccrine apparatus and secreted into sweat on skin (at protein level). As to expression, expressed in bone marrow and testis.

It localises to the secreted. Its subcellular location is the vesicle. Functionally, antimicrobial protein that is an integral component of the innate immune system. Binds to bacterial lipopolysaccharides (LPS). Acts via neutrophil N-formyl peptide receptors to enhance the release of CXCL2. Postsecretory processing generates multiple cathelicidin antimicrobial peptides with various lengths which act as a topical antimicrobial defense in sweat on skin. The unprocessed precursor form, cathelicidin antimicrobial peptide, inhibits the growth of Gram-negative E.coli and E.aerogenes with efficiencies comparable to that of the mature peptide LL-37 (in vitro). Antimicrobial peptide that is an integral component of the innate immune system. Binds to bacterial lipopolysaccharides (LPS). Causes membrane permeabilization by forming transmembrane pores (in vitro). Causes lysis of E.coli. Exhibits antimicrobial activity against Gram-negative bacteria such as P.aeruginosa, S.typhimurium, E.aerogenes, E.coli and P.syringae, Gram-positive bacteria such as L.monocytogenes, S.epidermidis, S.pyogenes and S.aureus, as well as vancomycin-resistant enterococci (in vitro). Exhibits antimicrobial activity against methicillin-resistant S.aureus, P.mirabilis, and C.albicans in low-salt media, but not in media containing 100 mM NaCl (in vitro). Forms chiral supramolecular assemblies with quinolone signal (PQS) molecules of P.aeruginosa, which may lead to interference of bacterial quorum signaling and perturbance of bacterial biofilm formation. May form supramolecular fiber-like assemblies on bacterial membranes. Induces cytokine and chemokine production as well as TNF/TNFA and CSF2/GMCSF production in normal human keratinocytes. Exhibits hemolytic activity against red blood cells. In terms of biological role, exhibits antimicrobial activity against E.coli and B.megaterium (in vitro). Its function is as follows. Acts synergistically with peptides KS-30 and KR-31, killing bacteria such as S.aureus, E.coli and C.albicans at lower concentrations when present together, and maintains activity at increased salt condition. Does not have the ability to stimulate CXCL8/IL8 release from keratinocytes. Functionally, poorly active (MIC &gt; 150 uM) against E.coli strain K12. Is able to induce the pro-inflammatory cytokine TNF/TNFA or the chemokine CCL2/MCP1. Moderately antibacterial. In terms of biological role, moderately antibacterial. Acts synergistically with peptides KR-20 and KR-31, killing bacteria such as S.aureus, E.coli and C.albicans at lower concentrations when present together, and maintain activity at increased salt condition. Does not have the ability to stimulate CXCL8/IL8 release from keratinocytes. Its function is as follows. Acts synergistically with peptides KS-30 and KR-31, killing bacteria such as S.aureus, E.coli and C.albicans at lower concentrations when present together, and maintain activity at increased salt condition. Does not have the ability to stimulate CXCL8/IL8 release from keratinocytes. Functionally, inhibits the growth of E.coli and B.megaterium and exhibits hemolytic activity against human red blood cells. This Homo sapiens (Human) protein is Cathelicidin antimicrobial peptide.